Here is a 406-residue protein sequence, read N- to C-terminus: Probable tRNA sulfurtransferase (406 aa).

The region spanning 62 to 167 is the THUMP domain; the sequence is AEVSNRLTKV…QDATYLSFED (106 aa). ATP-binding positions include 185-186, 210-211, R267, G289, and Q298; these read ML and HF.

It belongs to the ThiI family.

It is found in the cytoplasm. It catalyses the reaction [ThiI sulfur-carrier protein]-S-sulfanyl-L-cysteine + a uridine in tRNA + 2 reduced [2Fe-2S]-[ferredoxin] + ATP + H(+) = [ThiI sulfur-carrier protein]-L-cysteine + a 4-thiouridine in tRNA + 2 oxidized [2Fe-2S]-[ferredoxin] + AMP + diphosphate. The enzyme catalyses [ThiS sulfur-carrier protein]-C-terminal Gly-Gly-AMP + S-sulfanyl-L-cysteinyl-[cysteine desulfurase] + AH2 = [ThiS sulfur-carrier protein]-C-terminal-Gly-aminoethanethioate + L-cysteinyl-[cysteine desulfurase] + A + AMP + 2 H(+). It participates in cofactor biosynthesis; thiamine diphosphate biosynthesis. Catalyzes the ATP-dependent transfer of a sulfur to tRNA to produce 4-thiouridine in position 8 of tRNAs, which functions as a near-UV photosensor. Also catalyzes the transfer of sulfur to the sulfur carrier protein ThiS, forming ThiS-thiocarboxylate. This is a step in the synthesis of thiazole, in the thiamine biosynthesis pathway. The sulfur is donated as persulfide by IscS. The chain is Probable tRNA sulfurtransferase from Lactococcus lactis subsp. cremoris (strain MG1363).